Reading from the N-terminus, the 293-residue chain is Protease HtpX (293 aa).

The next 2 helical transmembrane spans lie at 4-24 (IGLF…VLSL) and 38-58 (LTNL…ISLF). His145 provides a ligand contact to Zn(2+). Glu146 is an active-site residue. Residue His149 coordinates Zn(2+). Transmembrane regions (helical) follow at residues 156–176 (ITLS…ARII) and 193–213 (IAFF…ASMI). Position 222 (Glu222) interacts with Zn(2+).

It belongs to the peptidase M48B family. The cofactor is Zn(2+).

Its subcellular location is the cell inner membrane. The polypeptide is Protease HtpX (Cellvibrio japonicus (strain Ueda107) (Pseudomonas fluorescens subsp. cellulosa)).